A 291-amino-acid polypeptide reads, in one-letter code: Small ribosomal subunit protein uS2 (291 aa).

The protein belongs to the universal ribosomal protein uS2 family.

This Lawsonia intracellularis (strain PHE/MN1-00) protein is Small ribosomal subunit protein uS2.